A 235-amino-acid chain; its full sequence is Segregation and condensation protein A (235 aa).

This sequence belongs to the ScpA family. As to quaternary structure, component of a cohesin-like complex composed of ScpA, ScpB and the Smc homodimer, in which ScpA and ScpB bind to the head domain of Smc. The presence of the three proteins is required for the association of the complex with DNA.

The protein resides in the cytoplasm. Participates in chromosomal partition during cell division. May act via the formation of a condensin-like complex containing Smc and ScpB that pull DNA away from mid-cell into both cell halves. The polypeptide is Segregation and condensation protein A (Streptococcus mutans serotype c (strain ATCC 700610 / UA159)).